Consider the following 284-residue polypeptide: Tropomyosin alpha-1 chain (284 aa).

Position 1 is an N-acetylmethionine (methionine 1). Residues 1–38 (MDAIKKKMQMLKLDKENALDRAEQAEADKKAAEDRSKQ) are disordered. Positions 1–284 (MDAIKKKMQM…DHALNDMTSI (284 aa)) form a coiled coil. Basic and acidic residues predominate over residues 12–38 (KLDKENALDRAEQAEADKKAAEDRSKQ). Alanine 31, serine 45, and lysine 51 each carry phosphoserine. The interval 116 to 136 (AEKAADESERGMKVIESRAQK) is disordered. Phosphoserine occurs at positions 174, 186, and 206. The residue at position 213 (lysine 213) is an N6-acetyllysine. At serine 252 the chain carries Phosphoserine. Tyrosine 261 carries the post-translational modification Phosphotyrosine. Serine 271 carries the phosphoserine modification. Serine 283 carries the phosphoserine; by DAPK1 modification.

The protein belongs to the tropomyosin family. In terms of assembly, homodimer. Heterodimer of an alpha (TPM1, TPM3 or TPM4) and a beta (TPM2) chain. Interacts with HRG (via the HRR domain); the interaction contributes to the antiangiogenic properties of the histidine/proline-rich region (HRR) of HRG. Interacts (via N-terminus) with LMOD2 (via N-terminus) and TMOD1 (via N-terminus). Phosphorylated at Ser-283 by DAPK1 in response to oxidative stress and this phosphorylation enhances stress fiber formation in endothelial cells. In terms of tissue distribution, detected in primary breast cancer tissues but undetectable in normal breast tissues in Sudanese patients. Isoform 1 is expressed in adult and fetal skeletal muscle and cardiac tissues, with higher expression levels in the cardiac tissues. Isoform 10 is expressed in adult and fetal cardiac tissues, but not in skeletal muscle.

It is found in the cytoplasm. It localises to the cytoskeleton. Functionally, binds to actin filaments in muscle and non-muscle cells. Plays a central role, in association with the troponin complex, in the calcium dependent regulation of vertebrate striated muscle contraction. Smooth muscle contraction is regulated by interaction with caldesmon. In non-muscle cells is implicated in stabilizing cytoskeleton actin filaments. This Homo sapiens (Human) protein is Tropomyosin alpha-1 chain (TPM1).